Reading from the N-terminus, the 967-residue chain is Phosphoenolpyruvate carboxylase 2 (967 aa).

Ser13 bears the Phosphoserine mark. Catalysis depends on residues His174 and Lys602.

It belongs to the PEPCase type 1 family. In terms of assembly, homotetramer. Mg(2+) serves as cofactor.

The protein localises to the cytoplasm. It catalyses the reaction oxaloacetate + phosphate = phosphoenolpyruvate + hydrogencarbonate. Its pathway is photosynthesis; C3 acid pathway. With respect to regulation, by light-reversible phosphorylation. Functionally, through the carboxylation of phosphoenolpyruvate (PEP) it forms oxaloacetate, a four-carbon dicarboxylic acid source for the tricarboxylic acid cycle. The sequence is that of Phosphoenolpyruvate carboxylase 2 (PEP4) from Zea mays (Maize).